The primary structure comprises 307 residues: 4-hydroxybenzoate octaprenyltransferase (307 aa).

The next 7 membrane-spanning stretches (helical) occupy residues 27 to 47, 50 to 70, 101 to 121, 142 to 162, 179 to 199, 239 to 259, and 285 to 305; these read AGWL…AGGF, WHLL…GCCI, LAVG…TNAL, CVAM…PMAF, AAVP…VLAY, LLAW…AAGL, and FRLN…DLGW.

This sequence belongs to the UbiA prenyltransferase family. Mg(2+) serves as cofactor.

The protein localises to the cell inner membrane. It catalyses the reaction all-trans-octaprenyl diphosphate + 4-hydroxybenzoate = 4-hydroxy-3-(all-trans-octaprenyl)benzoate + diphosphate. The protein operates within cofactor biosynthesis; ubiquinone biosynthesis. Catalyzes the prenylation of para-hydroxybenzoate (PHB) with an all-trans polyprenyl group. Mediates the second step in the final reaction sequence of ubiquinone-8 (UQ-8) biosynthesis, which is the condensation of the polyisoprenoid side chain with PHB, generating the first membrane-bound Q intermediate 3-octaprenyl-4-hydroxybenzoate. The protein is 4-hydroxybenzoate octaprenyltransferase of Methylibium petroleiphilum (strain ATCC BAA-1232 / LMG 22953 / PM1).